The following is a 341-amino-acid chain: L-threonine 3-dehydrogenase (341 aa).

Cys38 is a Zn(2+) binding site. Residues Thr40 and His43 each act as charge relay system in the active site. Zn(2+) is bound by residues His63, Glu64, Cys93, Cys96, Cys99, and Cys107. NAD(+)-binding positions include Ile175, Asp195, Arg200, 262–264 (LGI), and 286–287 (IY).

The protein belongs to the zinc-containing alcohol dehydrogenase family. Homotetramer. Requires Zn(2+) as cofactor.

The protein resides in the cytoplasm. It carries out the reaction L-threonine + NAD(+) = (2S)-2-amino-3-oxobutanoate + NADH + H(+). Its pathway is amino-acid degradation; L-threonine degradation via oxydo-reductase pathway; glycine from L-threonine: step 1/2. Functionally, catalyzes the NAD(+)-dependent oxidation of L-threonine to 2-amino-3-ketobutyrate. This Escherichia coli (strain K12 / MC4100 / BW2952) protein is L-threonine 3-dehydrogenase.